Consider the following 116-residue polypeptide: Aspartate 1-decarboxylase (116 aa).

Catalysis depends on S25, which acts as the Schiff-base intermediate with substrate; via pyruvic acid. S25 is modified (pyruvic acid (Ser)). Position 57 (T57) interacts with substrate. Residue Y58 is the Proton donor of the active site. Residue 73-75 participates in substrate binding; sequence GAA.

This sequence belongs to the PanD family. Heterooctamer of four alpha and four beta subunits. Pyruvate is required as a cofactor. In terms of processing, is synthesized initially as an inactive proenzyme, which is activated by self-cleavage at a specific serine bond to produce a beta-subunit with a hydroxyl group at its C-terminus and an alpha-subunit with a pyruvoyl group at its N-terminus.

It is found in the cytoplasm. It catalyses the reaction L-aspartate + H(+) = beta-alanine + CO2. It functions in the pathway cofactor biosynthesis; (R)-pantothenate biosynthesis; beta-alanine from L-aspartate: step 1/1. Catalyzes the pyruvoyl-dependent decarboxylation of aspartate to produce beta-alanine. The protein is Aspartate 1-decarboxylase of Parabacteroides distasonis (strain ATCC 8503 / DSM 20701 / CIP 104284 / JCM 5825 / NCTC 11152).